The sequence spans 402 residues: Oligopeptide transport ATP-binding protein OppD (402 aa).

The region spanning 22–309 is the ABC transporter domain; that stretch reads LDITDLHVNF…PLHPYTWALI (288 aa). 58-65 serves as a coordination point for ATP; sequence GESGSGKS.

Belongs to the ABC transporter superfamily. The complex is composed of two ATP-binding proteins (OppD and OppF), two transmembrane proteins (OppB and OppC) and a solute-binding protein (OppA).

It localises to the cell membrane. The enzyme catalyses a [peptide](out) + ATP + H2O = a [peptide](in) + ADP + phosphate + H(+). Its function is as follows. Part of the ABC transporter complex OppABCDF involved in the uptake of oligopeptides. Probably responsible for energy coupling to the transport system. This is Oligopeptide transport ATP-binding protein OppD (oppD) from Mycoplasma genitalium (strain ATCC 33530 / DSM 19775 / NCTC 10195 / G37) (Mycoplasmoides genitalium).